A 524-amino-acid polypeptide reads, in one-letter code: Rho guanine nucleotide exchange factor 3 (524 aa).

S46 and S69 each carry phosphoserine. Residues 121–303 (KRQEAIFELS…QGIVAEINTK (183 aa)) enclose the DH domain. Residues 290-448 (INIIQGIVAE…WLNCIRQAKE (159 aa)) enclose the PH domain. The disordered stretch occupies residues 461–524 (DSEGLVQGPG…CANSRPEESV (64 aa)). A compositionally biased stretch (basic and acidic residues) spans 472–484 (ENREPQGETKLEQ).

In terms of assembly, interacts with RHOA and RHOB.

It localises to the cytoplasm. Its function is as follows. Acts as a guanine nucleotide exchange factor (GEF) for RhoA and RhoB GTPases. This Mus musculus (Mouse) protein is Rho guanine nucleotide exchange factor 3 (Arhgef3).